Here is a 98-residue protein sequence, read N- to C-terminus: NADH-ubiquinone oxidoreductase chain 4L (98 aa).

Helical transmembrane passes span 1–21 (MTSINLNLTMAFSLALTGVLV), 28–48 (STLLCLEGMMLSLFILMALLI), and 59–79 (APLILLVFSACEAGVGLALLV).

The protein belongs to the complex I subunit 4L family. Core subunit of respiratory chain NADH dehydrogenase (Complex I) which is composed of 45 different subunits.

The protein localises to the mitochondrion inner membrane. The catalysed reaction is a ubiquinone + NADH + 5 H(+)(in) = a ubiquinol + NAD(+) + 4 H(+)(out). In terms of biological role, core subunit of the mitochondrial membrane respiratory chain NADH dehydrogenase (Complex I) which catalyzes electron transfer from NADH through the respiratory chain, using ubiquinone as an electron acceptor. Part of the enzyme membrane arm which is embedded in the lipid bilayer and involved in proton translocation. This Dactylopsila trivirgata (Striped possum) protein is NADH-ubiquinone oxidoreductase chain 4L (MT-ND4L).